We begin with the raw amino-acid sequence, 231 residues long: Regulatory factor X-associated protein (231 aa).

Positions 1–163 (MEAQAVPEGS…GNVKLEESTD (163 aa)) are disordered. Over residues 50-65 (ADAEDEAGDDDADLLD) the composition is skewed to acidic residues. The span at 115–138 (KQRKPWMCKKHRNKMYKDKYKKKK) shows a compositional bias: basic residues. A Nuclear localization signal motif is present at residues 123-138 (KKHRNKMYKDKYKKKK). Lys157 is covalently cross-linked (Glycyl lysine isopeptide (Lys-Gly) (interchain with G-Cter in SUMO2)).

In terms of assembly, RFX consists of at least 3 different subunits; RFXAP, RFX5 and RFX-B/RFXANK; with each subunit representing a separate complementation group. RFX forms cooperative DNA binding complexes with X2BP and CBF/NF-Y. RFX associates with CIITA to form an active transcriptional complex. Phosphorylated.

It is found in the nucleus. Its function is as follows. Part of the RFX complex that binds to the X-box of MHC II promoters. The protein is Regulatory factor X-associated protein (Rfxap) of Mus musculus (Mouse).